Here is a 198-residue protein sequence, read N- to C-terminus: Recombination protein RecR (198 aa).

The C4-type zinc-finger motif lies at 57-72; sequence CEKCNTFTEAQICEVC. A Toprim domain is found at 80-175; sequence TLLCVVETPA…AVTRLARGVP (96 aa).

It belongs to the RecR family.

May play a role in DNA repair. It seems to be involved in an RecBC-independent recombinational process of DNA repair. It may act with RecF and RecO. This is Recombination protein RecR from Paraburkholderia phytofirmans (strain DSM 17436 / LMG 22146 / PsJN) (Burkholderia phytofirmans).